The sequence spans 103 residues: Large ribosomal subunit protein bL21 (103 aa).

This sequence belongs to the bacterial ribosomal protein bL21 family. As to quaternary structure, part of the 50S ribosomal subunit. Contacts protein L20.

In terms of biological role, this protein binds to 23S rRNA in the presence of protein L20. The protein is Large ribosomal subunit protein bL21 of Bordetella avium (strain 197N).